The following is a 20-amino-acid chain: DVVASSTAHKQQDINHLLDK.

The segment at 1–20 (DVVASSTAHKQQDINHLLDK) is disordered. Residues 10-20 (KQQDINHLLDK) are compositionally biased toward basic and acidic residues.

The protein belongs to the tyrosinase family. Hemocyanin subfamily. Composed of 3 major subunits (IB, II and III) and 1 minor subunit (IA) which form homohexamers and heterohexamers. May also form larger structures. In terms of tissue distribution, hemolymph.

It localises to the secreted. The protein resides in the extracellular space. Functionally, hemocyanins are copper-containing oxygen carriers occurring freely dissolved in the hemolymph of many mollusks and arthropods. This Panulirus japonicus (Japanese spiny lobster) protein is Hemocyanin subunit II.